The primary structure comprises 176 residues: Transcriptional repressor MprA (176 aa).

One can recognise an HTH marR-type domain in the interval 26-160 (EILLTRLCMH…LEQITRKLLS (135 aa)).

Negative regulator of the multidrug operon emrAB. This chain is Transcriptional repressor MprA (mprA), found in Escherichia coli O157:H7.